The following is a 110-amino-acid chain: ATP synthase subunit c (110 aa).

Transmembrane regions (helical) follow at residues 4–24 (FFVI…VFAA), 37–57 (ATAG…AGMG), and 81–101 (FIVG…FVLI).

This sequence belongs to the ATPase C chain family. F-type ATPases have 2 components, F(1) - the catalytic core - and F(0) - the membrane proton channel. F(1) has five subunits: alpha(3), beta(3), gamma(1), delta(1), epsilon(1). F(0) has three main subunits: a(1), b(2) and c(10-14). The alpha and beta chains form an alternating ring which encloses part of the gamma chain. F(1) is attached to F(0) by a central stalk formed by the gamma and epsilon chains, while a peripheral stalk is formed by the delta and b chains.

It is found in the cell inner membrane. In terms of biological role, f(1)F(0) ATP synthase produces ATP from ADP in the presence of a proton or sodium gradient. F-type ATPases consist of two structural domains, F(1) containing the extramembraneous catalytic core and F(0) containing the membrane proton channel, linked together by a central stalk and a peripheral stalk. During catalysis, ATP synthesis in the catalytic domain of F(1) is coupled via a rotary mechanism of the central stalk subunits to proton translocation. Functionally, key component of the F(0) channel; it plays a direct role in translocation across the membrane. A homomeric c-ring of between 10-14 subunits forms the central stalk rotor element with the F(1) delta and epsilon subunits. The chain is ATP synthase subunit c from Thermodesulfovibrio yellowstonii (strain ATCC 51303 / DSM 11347 / YP87).